The primary structure comprises 331 residues: Olfactory receptor 10S1 (331 aa).

At 1–38 the chain is on the extracellular side; it reads MTSRSVCEKMTMTTENPNQTVVSHFFLEGLRYTAKHSS. N-linked (GlcNAc...) asparagine glycosylation occurs at asparagine 18. The chain crosses the membrane as a helical span at residues 39–59; sequence LFFLLFLLIYSITVAGNLLIL. Over 60-67 the chain is Cytoplasmic; it reads LTVGSDSH. Residues 68-88 traverse the membrane as a helical segment; that stretch reads LSLPMYHFLGHLSFLDACLST. The Extracellular portion of the chain corresponds to 89–113; it reads VTVPKVMAGLLTLDGKVISFEGCAV. A disulfide bridge connects residues cysteine 111 and cysteine 203. The helical transmembrane segment at 114-134 threads the bilayer; it reads QLYCFHFLASTECFLYTVMAY. The Cytoplasmic segment spans residues 135 to 153; sequence DRYLAICQPLHYPVAMNRR. Residues 154 to 174 form a helical membrane-spanning segment; the sequence is MCAEMAGITWAIGATHAAIHT. Residues 175–211 lie on the Extracellular side of the membrane; the sequence is SLTFRLLYCGPCHIAYFFCDIPPVLKLACTDTTINEL. A helical transmembrane segment spans residues 212 to 231; the sequence is VMLASIGIVAAGCLILIVIS. At 232–251 the chain is on the cytoplasmic side; it reads YIFIVAAVLRIRTAQGRQRA. A helical membrane pass occupies residues 252–272; that stretch reads FSPCTAQLTGVLLYYVPPVCI. At 273–283 the chain is on the extracellular side; that stretch reads YLQPRSSEAGA. The chain crosses the membrane as a helical span at residues 284–304; sequence GAPAVFYTIVTPMLNPFIYTL. At 305 to 331 the chain is on the cytoplasmic side; sequence RNKEVKHALQRLLCSSFRESTAGSPPP.

Belongs to the G-protein coupled receptor 1 family.

It localises to the cell membrane. Its function is as follows. Odorant receptor. This chain is Olfactory receptor 10S1 (OR10S1), found in Homo sapiens (Human).